Here is a 104-residue protein sequence, read N- to C-terminus: MPKSDTKQKKRRSNKNRLRIKRARLFGPKDIDQVKEDIESQKKIEYDPELPGGGHFYCCECDRHFITEKVLMEHKRSNPHRRRAKEVREVAHSQRDAEWAVGLT.

Residues Phe-56–His-80 form a C2H2-type zinc finger.

It belongs to the ZNF593/BUD20 C2H2-type zinc-finger protein family. Associates with pre-60S ribosomal particles; released from the pre-60S particle very early in the cytoplasm.

The protein resides in the nucleus. The protein localises to the cytoplasm. Functionally, involved in pre-60S ribosomal particles maturation by promoting the nuclear export of the 60S ribosome. This is Zinc finger C2H2 protein ECU02_0310 from Encephalitozoon cuniculi (strain GB-M1) (Microsporidian parasite).